The sequence spans 72 residues: UPF0495 protein KLLA0D04334g (72 aa).

The chain crosses the membrane as a helical span at residues 20-42 (PVELTPLFLAMGVALASGTWFSY).

It belongs to the UPF0495 family.

Its subcellular location is the membrane. The protein is UPF0495 protein KLLA0D04334g of Kluyveromyces lactis (strain ATCC 8585 / CBS 2359 / DSM 70799 / NBRC 1267 / NRRL Y-1140 / WM37) (Yeast).